The primary structure comprises 805 residues: H(+)/Cl(-) exchange transporter 7 (805 aa).

Residues 1-49 form a disordered region; the sequence is MANVSKKVSWSGRDRDDEEAAPLLRRTARPGGGTPLLNGAGPGAARQSP. At 1–126 the chain is on the cytoplasmic side; that stretch reads MANVSKKVSW…TAFRTVEIKR (126 aa). Residues Ser-9 and Ser-60 each carry the phosphoserine modification. 2 consecutive transmembrane segments (helical) span residues 127–159 and 174–197; these read WVICALIGILTGLVACFIDIVVENLAGLKYRVI and FSLLLWATLNAAFVLVGSVIVAFI. The Selectivity filter part_1 motif lies at 203 to 207; the sequence is GSGIP. Residue Ser-204 coordinates chloride. Residues 206–213 constitute an intramembrane region (helical); the sequence is IPQIKCFL. The next 2 helical transmembrane spans lie at 223–241 and 247–264; these read RLKTLVIKVSGVILSVVGG and EGPMIHSGSVIAAGISQG. Residues 245 to 249 carry the Selectivity filter part_2 motif; that stretch reads GKEGP. 2 intramembrane regions (helical) span residues 288–300 and 304–312; these read FVSAGAAAGVSAA and PVGGVLFSL. A run of 5 helical transmembrane segments spans residues 322–341, 375–405, 410–432, 487–507, and 512–535; these read FLTWRIFFASMISTFTLNFV, IPVFIAMGVVGGVLGAVFNALNYWLTMFRIR, PCLQVIEAVLVAAVTATVAFVLI, PLTLGLFTLVYFFLACWTYGL, and GVFIPSLLIGAAWGRLFGISLSYL. The short motif at 512 to 516 is the Selectivity filter part_3 element; the sequence is GVFIP. Residue Phe-514 coordinates chloride. The helical intramembrane region spans 545–559; the sequence is GKYALMGAAAQLGGI. The note=Loop between two helices intramembrane region spans 560-562; the sequence is VRM. An intramembrane region (helical) is located at residues 563-574; it reads TLSLTVIMMEAT. Residues 575-578 constitute an intramembrane region (note=Loop between two helices); the sequence is SNVT. The chain crosses the membrane as a helical span at residues 579–597; sequence YGFPIMLVLMTAKIVGDVF. Over 598-805 the chain is Cytoplasmic; the sequence is IEGLYDMHIQ…GLEELSLAQT (208 aa). Chloride is bound at residue Tyr-602. 2 CBS domains span residues 631–695 and 741–799; these read MSTP…VFVE and MNPS…GLEE. ATP contacts are provided by residues 658–660 and 783–786; these read HNG and TRKD. Ser-801 is modified (phosphoserine).

This sequence belongs to the chloride channel (TC 2.A.49) family. ClC-7/CLCN7 subfamily. As to quaternary structure, chloride channel 7 are heteromers of alpha (CLCN7) and beta (OSTM1) subunits. Brain and kidney.

Its subcellular location is the lysosome membrane. It carries out the reaction 2 chloride(in) + H(+)(out) = 2 chloride(out) + H(+)(in). Its function is as follows. Slowly voltage-gated channel mediating the exchange of chloride ions against protons. Functions as antiporter and contributes to the acidification of the lysosome lumen and may be involved in maintaining lysosomal pH. The CLC channel family contains both chloride channels and proton-coupled anion transporters that exchange chloride or another anion for protons. The presence of conserved gating glutamate residues is typical for family members that function as antiporters. This is H(+)/Cl(-) exchange transporter 7 from Homo sapiens (Human).